A 317-amino-acid polypeptide reads, in one-letter code: Small ribosomal subunit protein uS2 (317 aa).

The residue at position 2 (serine 2) is an N-acetylserine. Laminin-binding stretches follow at residues 161-180 (IPCNNKGPHSVGLMWWMLAR) and 205-229 (RDPEEIEKEEQAAAEKAVGKEEFQG). [DE]-W-[ST] repeat units follow at residues 230 to 232 (EWS), 245 to 247 (DWS), 288 to 290 (DWS), 297 to 299 (DWS), and 315 to 317 (EWS). The tract at residues 242–317 (EVPDWSEGVQ…DWGGSTAEWS (76 aa)) is laminin-binding. Residues 278–317 (PGPTTEGYSEDWSAQPATEDWSAAPTAQAGDWGGSTAEWS) form a disordered region.

The protein belongs to the universal ribosomal protein uS2 family. Monomer (37LRP) and homodimer (67LR). Component of the small ribosomal subunit. Mature ribosomes consist of a small (40S) and a large (60S) subunit. The 40S subunit contains about 33 different proteins and 1 molecule of RNA (18S). The 60S subunit contains about 49 different proteins and 3 molecules of RNA (28S, 5.8S and 5S). Interacts with rps21. Interacts with several laminins including at least lamb1. Interacts with mdk. Acylated. Acylation may be a prerequisite for conversion of the monomeric 37 kDa laminin receptor precursor (37LRP) to the mature dimeric 67 kDa laminin receptor (67LR), and may provide a mechanism for membrane association. Post-translationally, cleaved by stromelysin-3 (ST3) at the cell surface. Cleavage by stromelysin-3 may be a mechanism to alter cell-extracellular matrix interactions.

Its subcellular location is the cell membrane. It is found in the cytoplasm. The protein resides in the nucleus. Required for the assembly and/or stability of the 40S ribosomal subunit. Required for the processing of the 20S rRNA-precursor to mature 18S rRNA in a late step of the maturation of 40S ribosomal subunits. Also functions as a cell surface receptor for laminin. Plays a role in cell adhesion to the basement membrane and in the consequent activation of signaling transduction pathways. May play a role in cell fate determination and tissue morphogenesis. In Ictalurus punctatus (Channel catfish), this protein is Small ribosomal subunit protein uS2 (rpsa).